Consider the following 132-residue polypeptide: Phosphoribosyl-AMP cyclohydrolase (132 aa).

D89 contacts Mg(2+). C90 provides a ligand contact to Zn(2+). 2 residues coordinate Mg(2+): D91 and D93. Zn(2+) contacts are provided by C106 and C113.

This sequence belongs to the PRA-CH family. As to quaternary structure, homodimer. It depends on Mg(2+) as a cofactor. Zn(2+) is required as a cofactor.

It is found in the cytoplasm. It catalyses the reaction 1-(5-phospho-beta-D-ribosyl)-5'-AMP + H2O = 1-(5-phospho-beta-D-ribosyl)-5-[(5-phospho-beta-D-ribosylamino)methylideneamino]imidazole-4-carboxamide. It functions in the pathway amino-acid biosynthesis; L-histidine biosynthesis; L-histidine from 5-phospho-alpha-D-ribose 1-diphosphate: step 3/9. Its function is as follows. Catalyzes the hydrolysis of the adenine ring of phosphoribosyl-AMP. The sequence is that of Phosphoribosyl-AMP cyclohydrolase from Renibacterium salmoninarum (strain ATCC 33209 / DSM 20767 / JCM 11484 / NBRC 15589 / NCIMB 2235).